A 456-amino-acid chain; its full sequence is RuvB-like helicase 1 (456 aa).

Position 70–77 (70–77) interacts with ATP; that stretch reads GPPGTGKT.

Belongs to the RuvB family. In terms of assembly, forms homohexameric rings. May form a dodecamer with rept made of two stacked hexameric rings. Component of the chromatin remodeling Ino80 complex.

It localises to the nucleus. The catalysed reaction is ATP + H2O = ADP + phosphate + H(+). Its function is as follows. Acts as a transcriptional coactivator in Wg signaling caused by altered arm signaling. Pont and rept interfere antagonistically with nuclear arm signaling function, and are required to enhance or reduce arm activity, respectively. Also an essential cofactor for the normal function of Myc; required for cellular proliferation and growth. Proposed core component of the chromatin remodeling Ino80 complex which is involved in transcriptional regulation, DNA replication and probably DNA repair. This Drosophila pseudoobscura pseudoobscura (Fruit fly) protein is RuvB-like helicase 1.